We begin with the raw amino-acid sequence, 140 residues long: Holo-[acyl-carrier-protein] synthase (140 aa).

Mg(2+) is bound by residues Asp8 and Glu62.

It belongs to the P-Pant transferase superfamily. AcpS family. The cofactor is Mg(2+).

It is found in the cytoplasm. It catalyses the reaction apo-[ACP] + CoA = holo-[ACP] + adenosine 3',5'-bisphosphate + H(+). Its function is as follows. Transfers the 4'-phosphopantetheine moiety from coenzyme A to a Ser of acyl-carrier-protein. This is Holo-[acyl-carrier-protein] synthase from Cupriavidus necator (strain ATCC 17699 / DSM 428 / KCTC 22496 / NCIMB 10442 / H16 / Stanier 337) (Ralstonia eutropha).